Here is a 504-residue protein sequence, read N- to C-terminus: Arabinose import ATP-binding protein AraG (504 aa).

ABC transporter domains follow at residues 8–243 (LSFR…MVGR) and 256–499 (YGEE…MPKV). Position 40–47 (40–47 (GENGAGKS)) interacts with ATP.

The protein belongs to the ABC transporter superfamily. Arabinose importer (TC 3.A.1.2.2) family. As to quaternary structure, the complex is composed of two ATP-binding proteins (AraG), two transmembrane proteins (AraH) and a solute-binding protein (AraF).

The protein resides in the cell inner membrane. The catalysed reaction is L-arabinose(out) + ATP + H2O = L-arabinose(in) + ADP + phosphate + H(+). In terms of biological role, part of the ABC transporter complex AraFGH involved in arabinose import. Responsible for energy coupling to the transport system. This Shigella sonnei (strain Ss046) protein is Arabinose import ATP-binding protein AraG.